The sequence spans 251 residues: 2-C-methyl-D-erythritol 4-phosphate cytidylyltransferase (251 aa).

The protein belongs to the IspD/TarI cytidylyltransferase family. IspD subfamily.

The enzyme catalyses 2-C-methyl-D-erythritol 4-phosphate + CTP + H(+) = 4-CDP-2-C-methyl-D-erythritol + diphosphate. It functions in the pathway isoprenoid biosynthesis; isopentenyl diphosphate biosynthesis via DXP pathway; isopentenyl diphosphate from 1-deoxy-D-xylulose 5-phosphate: step 2/6. Its function is as follows. Catalyzes the formation of 4-diphosphocytidyl-2-C-methyl-D-erythritol from CTP and 2-C-methyl-D-erythritol 4-phosphate (MEP). This chain is 2-C-methyl-D-erythritol 4-phosphate cytidylyltransferase, found in Cupriavidus pinatubonensis (strain JMP 134 / LMG 1197) (Cupriavidus necator (strain JMP 134)).